The sequence spans 191 residues: UPF0228 protein MM_1428 (191 aa).

Belongs to the UPF0228 family.

The sequence is that of UPF0228 protein MM_1428 from Methanosarcina mazei (strain ATCC BAA-159 / DSM 3647 / Goe1 / Go1 / JCM 11833 / OCM 88) (Methanosarcina frisia).